The following is a 386-amino-acid chain: Probable zinc transporter zrg17 (386 aa).

6 consecutive transmembrane segments (helical) span residues 102–122 (ILFF…ILLT), 128–148 (IVEG…SFLV), 163–183 (MELL…MNLL), 208–228 (VHIH…FALL), 243–263 (FFHG…SLGY), and 268–288 (FLSH…GFSI).

It belongs to the cation diffusion facilitator (CDF) transporter (TC 2.A.4) family. SLC30A subfamily. Interacts with cis4.

Its subcellular location is the cytoplasm. The protein localises to the nucleus membrane. In terms of biological role, probable transporter involved in the regulation of zinc homeostasis. The polypeptide is Probable zinc transporter zrg17 (zrg17) (Schizosaccharomyces pombe (strain 972 / ATCC 24843) (Fission yeast)).